The sequence spans 425 residues: Serine--tRNA ligase (425 aa).

228-230 contacts L-serine; sequence TAE. 259 to 261 contacts ATP; it reads RSE. Glu-282 contacts L-serine. An ATP-binding site is contributed by 346-349; that stretch reads EIAS. L-serine is bound at residue Ser-382.

This sequence belongs to the class-II aminoacyl-tRNA synthetase family. Type-1 seryl-tRNA synthetase subfamily. In terms of assembly, homodimer. The tRNA molecule binds across the dimer.

It localises to the cytoplasm. It catalyses the reaction tRNA(Ser) + L-serine + ATP = L-seryl-tRNA(Ser) + AMP + diphosphate + H(+). The enzyme catalyses tRNA(Sec) + L-serine + ATP = L-seryl-tRNA(Sec) + AMP + diphosphate + H(+). Its pathway is aminoacyl-tRNA biosynthesis; selenocysteinyl-tRNA(Sec) biosynthesis; L-seryl-tRNA(Sec) from L-serine and tRNA(Sec): step 1/1. Catalyzes the attachment of serine to tRNA(Ser). Is also able to aminoacylate tRNA(Sec) with serine, to form the misacylated tRNA L-seryl-tRNA(Sec), which will be further converted into selenocysteinyl-tRNA(Sec). The chain is Serine--tRNA ligase from Rickettsia felis (strain ATCC VR-1525 / URRWXCal2) (Rickettsia azadi).